Here is a 683-residue protein sequence, read N- to C-terminus: MLFIFNFLFSPLPTPALICLLTFGTAIFLWLINRPQPVLPLIDLDNQSVGIEGGARRGAFQKNNDLILYYFSDAKTLYEVFQRGLAVSDNGPCLGYRKPNQPYKWISYKQVSDRAEYLGSCLLHKGYKPSQDQFIGIFAQNRPEWVISELACYTYSMVAVPLYDTLGAEAIIYVINRADISVVICDTPQKATMLIENVEKDLTPGLKTVILMDPFDDDLMKRGEKCGIEMLSLHDAENLGKENFKKPMPPNPEDLSVICFTSGTTGDPKGAMLTHQNIVSNMAAFLKFLEPIFQPTPEDVTISYLPLAHMFERLVQGVIFSCGGKIGFFQGDIRLLPDDMKALKPTVFPTVPRLLNRVYDKVQNEAKTPLKKFLLNLAIISKFNEVRNGIIRRNSLWDKLVFSKIQSSLGGKVRLMITGAAPISTPVLTFFRAAMGCWVFEAYGQTECTAGCSITSPGDWTAGHVGTPVSCNFVKLEDVADMNYFSVNNEGEICIKGNNVFKGYLKDPEKTQEVLDKDGWLHTGDIGRWLPNGTLKIIDRKKNIFKLAQGEYIAPEKIENVYSRSRPILQVFVHGESLRSFLIGVVVPDPESLPSFAAKIGVKGSFEELCQNQCVKKAILEDLQKVGKEGGLKSFEQVKSIFVHPEPFSIENGLLTPTLKAKRVELAKFFQTQIKSLYESIEE.

Residues 12–32 traverse the membrane as a helical; Signal-anchor for type III membrane protein segment; the sequence is LPTPALICLLTFGTAIFLWLI. Residues 33–683 are Cytoplasmic-facing; that stretch reads NRPQPVLPLI…IKSLYESIEE (651 aa). N6-acetyllysine is present on K361.

It belongs to the ATP-dependent AMP-binding enzyme family. Expressed most abundantly in the small intestine, and to a much lesser extent in the lung, liver, adrenal gland, adipose tissue and kidney.

The protein resides in the mitochondrion. Its subcellular location is the endoplasmic reticulum. It is found in the mitochondrion outer membrane. The protein localises to the endoplasmic reticulum membrane. It localises to the cell membrane. The enzyme catalyses a long-chain fatty acid + ATP + CoA = a long-chain fatty acyl-CoA + AMP + diphosphate. It catalyses the reaction (5Z,8Z,11Z,14Z)-eicosatetraenoate + ATP + CoA = (5Z,8Z,11Z,14Z)-eicosatetraenoyl-CoA + AMP + diphosphate. The catalysed reaction is 15-hydroxy-(5Z,8Z,11Z,13E)-eicosatetraenoate + ATP + CoA = 15-hydroxy-(5Z,8Z,11Z,13E)-eicosatetraenoyl-CoA + AMP + diphosphate. It carries out the reaction 12-hydroxy-(5Z,8Z,10E,14Z)-eicosatetraenoate + ATP + CoA = 12-hydroxy-(5Z,8Z,10E,14Z)-eicosatetraenoyl-CoA + AMP + diphosphate. The enzyme catalyses 5-hydroxy-(6E,8Z,11Z,14Z)-eicosatetraenoate + ATP + CoA = 5-hydroxy-(6E,8Z,11Z,14Z)-eicosatetraenoyl-CoA + AMP + diphosphate. It catalyses the reaction 14,15-epoxy-(5Z,8Z,11Z)-eicosatrienoate + ATP + CoA = 14,15-epoxy-(5Z,8Z,11Z)-eicosatrienoyl-CoA + AMP + diphosphate. The catalysed reaction is 11,12-epoxy-(5Z,8Z,14Z)-eicosatrienoate + ATP + CoA = 11,12-epoxy-(5Z,8Z,14Z)-eicosatrienoyl-CoA + AMP + diphosphate. It carries out the reaction hexadecanoate + ATP + CoA = hexadecanoyl-CoA + AMP + diphosphate. The enzyme catalyses (E)-hexadec-2-enoate + ATP + CoA = (2E)-hexadecenoyl-CoA + AMP + diphosphate. It catalyses the reaction (9Z)-octadecenoate + ATP + CoA = (9Z)-octadecenoyl-CoA + AMP + diphosphate. In terms of biological role, catalyzes the conversion of long-chain fatty acids to their active form acyl-CoAs for both synthesis of cellular lipids, and degradation via beta-oxidation. ACSL5 may sensitize epithelial cells to apoptosis specifically triggered by the death ligand TRAIL at the villus tip of the crypt-villus axis of the small intestine. May have a role in the survival of glioma cells. May activate fatty acids from exogenous sources for the synthesis of triacylglycerol destined for intracellular storage. It was suggested that it may also stimulate fatty acid oxidation. Utilizes a wide range of saturated fatty acids with a preference for C16-C18 unsaturated fatty acids. The chain is Long-chain-fatty-acid--CoA ligase 5 from Rattus norvegicus (Rat).